The chain runs to 467 residues: Asparagine--tRNA ligase (467 aa).

The protein belongs to the class-II aminoacyl-tRNA synthetase family. In terms of assembly, homodimer.

It localises to the cytoplasm. The catalysed reaction is tRNA(Asn) + L-asparagine + ATP = L-asparaginyl-tRNA(Asn) + AMP + diphosphate + H(+). The chain is Asparagine--tRNA ligase from Legionella pneumophila (strain Paris).